A 131-amino-acid chain; its full sequence is Small ribosomal subunit protein uS8 (131 aa).

It belongs to the universal ribosomal protein uS8 family. In terms of assembly, part of the 30S ribosomal subunit. Contacts proteins S5 and S12.

In terms of biological role, one of the primary rRNA binding proteins, it binds directly to 16S rRNA central domain where it helps coordinate assembly of the platform of the 30S subunit. The sequence is that of Small ribosomal subunit protein uS8 from Burkholderia multivorans (strain ATCC 17616 / 249).